The chain runs to 164 residues: Phosphopantetheine adenylyltransferase (164 aa).

Threonine 9 serves as a coordination point for substrate. Residues 9–10 (TF) and histidine 17 contribute to the ATP site. Positions 41, 76, and 90 each coordinate substrate. Residues 91–93 (GLR), glutamate 101, and 126–132 (YQFVSSS) contribute to the ATP site.

This sequence belongs to the bacterial CoaD family. Homohexamer. The cofactor is Mg(2+).

It localises to the cytoplasm. The enzyme catalyses (R)-4'-phosphopantetheine + ATP + H(+) = 3'-dephospho-CoA + diphosphate. Its pathway is cofactor biosynthesis; coenzyme A biosynthesis; CoA from (R)-pantothenate: step 4/5. Functionally, reversibly transfers an adenylyl group from ATP to 4'-phosphopantetheine, yielding dephospho-CoA (dPCoA) and pyrophosphate. This Coprothermobacter proteolyticus (strain ATCC 35245 / DSM 5265 / OCM 4 / BT) protein is Phosphopantetheine adenylyltransferase.